Reading from the N-terminus, the 193-residue chain is Early light-induced protein 2, chloroplastic (193 aa).

A chloroplast-targeting transit peptide spans Met-1 to Met-43. The disordered stretch occupies residues Gly-46–Val-80. Residues Ser-54–Pro-64 are compositionally biased toward low complexity. The span at Pro-65–Ser-76 shows a compositional bias: pro residues. 3 helical membrane passes run Leu-102–Phe-122, Gly-129–Phe-149, and Phe-173–Val-193.

The protein belongs to the ELIP/psbS family.

It localises to the plastid. Its subcellular location is the chloroplast thylakoid membrane. Functionally, probably involved in the integration of pigments into the mature light-harvesting pigment-protein complexes. Light-harvesting chlorophyll (LHC) a/b-binding protein required to ensure a high rate of chlorophyll accumulation during deetiolation in continuous high light. Involved in seed germination. May fulfill a photoprotective functions. Prevents excess accumulation of free chlorophyll by inhibiting the entire chlorophyll biosynthesis pathway (e.g. 5-aminolevulinate synthesis and Mg-protoporphyrin IX chelatase activity), and hence prevent photooxidative stress. This Arabidopsis thaliana (Mouse-ear cress) protein is Early light-induced protein 2, chloroplastic.